A 569-amino-acid chain; its full sequence is Retrotransposon Gag-like protein 5 (569 aa).

Disordered regions lie at residues Asp115–Pro151 and Arg323–Arg506. A compositionally biased stretch (pro residues) spans Pro117–Ala146. A compositionally biased stretch (acidic residues) spans Asn334–Gln350. The segment covering Arg353–Arg367 has biased composition (basic residues). Basic and acidic residues-rich tracts occupy residues Glu372 to Glu392 and Met401 to Glu415. Composition is skewed to acidic residues over residues Glu416–Asp429 and Gly443–Glu469. The span at His476–Thr485 shows a compositional bias: polar residues.

This chain is Retrotransposon Gag-like protein 5, found in Homo sapiens (Human).